We begin with the raw amino-acid sequence, 191 residues long: Calcium and integrin-binding protein 1 (191 aa).

A lipid anchor (N-myristoyl glycine) is attached at Gly-2. 2 consecutive EF-hand domains span residues 103-138 (TPDIKSHYAFRIFDFDDDGTLDREDLSQLVNCLTGE) and 148-183 (EMKQLIDNILEESDIDRDGTINLSEFQHVISRSPDF). Asp-116, Asp-118, Asp-120, Thr-122, Asp-127, Asp-161, Asp-163, Asp-165, Thr-167, and Glu-172 together coordinate Ca(2+).

As to quaternary structure, monomer. Interacts with the heterodimeric integrin alpha-IIb/beta3 (ITGA2B-ITGB3). Interacts with ITGA2B (via cytoplasmic domain); the interaction is direct and calcium-dependent. Interacts with the protein kinases PLK2/SNK and PRKDC (via the region immediately upstream of the kinase domain). Interacts with PLK3; the interaction inhibits PLK3 kinase activity. Interacts with PSEN2. Interacts (via C-terminus) with F8. Interacts with NBR1 (via C-terminus). Interacts with FEZ1 (via C-terminus). Interacts with UBR5 (via C-terminus); the interaction is sensitive to DNA damage, and may target CIB1 for ubiquitin-mediated degradation. Interacts with IFI6; the interaction is direct. Interacts with BCL2. Interacts with TAS1R2 (via C-terminus); the interaction is independent of the myristoylation state of CIB1. Interacts with ITPR3; the interaction occurs in a calcium dependent manner. Interacts with PTK2/FAK1. Interacts with MAP3K5; the interaction inhibits MAP3K5 activation by phosphorylation, and its subsequent interaction with TRAF2. Interacts (via C-terminal region) with STMN2 (via the N-terminal region); the interaction is direct, occurs in a calcium-dependent manner and attenuates the STMN2-induced neurite outgrowth inhibition. Interacts with SPHK1, the interaction occurs in a calcium-dependent manner. Interacts with ITGA2B (via C-terminal cytoplasmic tail); the interaction occurs upon platelet aggregation and is stabilized/increased in a calcium and magnesium-dependent manner. Interacts with PAK1 (via N-terminal region); the interaction is direct and occurs in a calcium-dependent manner. Interacts with RAC3 (via C-terminal region); the interaction induces their association with the cytoskeleton upon alpha-IIb/beta3 integrin-mediated adhesion. Interacts with ITGA5 and ITGAV. Interacts with MYO1C. Interacts with ITGA2B (via C-terminal cytoplasmic tail region). Interacts (via C-terminal region) with PPP3R1 isoform 1 and isoform 2; the interactions increase upon cardiomyocytes hypertrophy. Interacts with CACNA1C; the interaction increases upon cardiomyocytes hypertrophy. Interacts and forms a complex with TMC6 and TMC8; the interaction stabilizes each component of the complex. In terms of tissue distribution, expressed strongly in Sertoli cells, weakly in pachytene spermatocytes, round spermatids and condensing spermatids (at protein level). Expressed in testis. Expressed in cardiac myocytes and endothelial cells. Expressed in heart, liver, spleen, lung, kidney, brain and inner ear. In the inner ear, expressed in the vestibule, basilar membrane and spiral ganglion cells.

The protein resides in the membrane. It localises to the cell membrane. The protein localises to the sarcolemma. It is found in the apical cell membrane. Its subcellular location is the cell projection. The protein resides in the ruffle membrane. It localises to the filopodium tip. The protein localises to the growth cone. It is found in the lamellipodium. Its subcellular location is the cytoplasm. The protein resides in the cytoskeleton. It localises to the microtubule organizing center. The protein localises to the centrosome. It is found in the perinuclear region. Its subcellular location is the nucleus. The protein resides in the neuron projection. It localises to the perikaryon. In terms of biological role, calcium-binding protein that plays a role in the regulation of numerous cellular processes, such as cell differentiation, cell division, cell proliferation, cell migration, thrombosis, angiogenesis, cardiac hypertrophy and apoptosis. Involved in bone marrow megakaryocyte differentiation by negatively regulating thrombopoietin-mediated signaling pathway. Participates in the endomitotic cell cycle of megakaryocyte, a form of mitosis in which both karyokinesis and cytokinesis are interrupted. Plays a role in integrin signaling by negatively regulating alpha-IIb/beta3 activation in thrombin-stimulated megakaryocytes preventing platelet aggregation. Up-regulates PTK2/FAK1 activity, and is also needed for the recruitment of PTK2/FAK1 to focal adhesions; it thus appears to play an important role in focal adhesion formation. Positively regulates cell migration on fibronectin in a CDC42-dependent manner, the effect being negatively regulated by PAK1. Functions as a negative regulator of stress activated MAP kinase (MAPK) signaling pathways. Down-regulates inositol 1,4,5-trisphosphate receptor-dependent calcium signaling. Involved in sphingosine kinase SPHK1 translocation to the plasma membrane in a N-myristoylation-dependent manner preventing TNF-alpha-induced apoptosis. Regulates serine/threonine-protein kinase PLK3 activity for proper completion of cell division progression. Plays a role in microtubule (MT) dynamics during neuronal development; disrupts the MT depolymerization activity of STMN2 attenuating NGF-induced neurite outgrowth and the MT reorganization at the edge of lamellipodia. Promotes cardiomyocyte hypertrophy via activation of the calcineurin/NFAT signaling pathway. Stimulates calcineurin PPP3R1 activity by mediating its anchoring to the sarcolemma. In ischemia-induced (pathological or adaptive) angiogenesis, stimulates endothelial cell proliferation, migration and microvessel formation by activating the PAK1 and ERK1/ERK2 signaling pathway. Also promotes cancer cell survival and proliferation. May regulate cell cycle and differentiation of spermatogenic germ cells, and/or differentiation of supporting Sertoli cells. Forms a complex with TMC6/EVER1 and TMC8/EVER2 in lymphocytes and keratynocytes where CIB1 stabilizes TMC6 and TMC8 levels and reciprocally. This is Calcium and integrin-binding protein 1 (Cib1) from Mus musculus (Mouse).